Consider the following 147-residue polypeptide: MGNHLDGSYQPNMVMSIEDKQNKYNEAKERSKVCNKVYINQSGKIDKKELKRIKKLDFFYSQKNDDEIERMFFNMPNGTFLLTDDVTHENIYIAQKDLENGSLNIAKLEFKGEALYINGKNYFFLENYLKTFEDIYKYPLTNFNENK.

It belongs to the asfivirus MGF 100 family.

In terms of biological role, plays a role in virus cell tropism, and may be required for efficient virus replication in macrophages. The polypeptide is Protein MGF 100-3L (African swine fever virus (isolate Tick/Malawi/Lil 20-1/1983) (ASFV)).